The following is a 237-amino-acid chain: Ribonuclease PH (237 aa).

Phosphate-binding positions include Arg86 and 124-126 (GTR).

The protein belongs to the RNase PH family. As to quaternary structure, homohexameric ring arranged as a trimer of dimers.

The catalysed reaction is tRNA(n+1) + phosphate = tRNA(n) + a ribonucleoside 5'-diphosphate. Phosphorolytic 3'-5' exoribonuclease that plays an important role in tRNA 3'-end maturation. Removes nucleotide residues following the 3'-CCA terminus of tRNAs; can also add nucleotides to the ends of RNA molecules by using nucleoside diphosphates as substrates, but this may not be physiologically important. Probably plays a role in initiation of 16S rRNA degradation (leading to ribosome degradation) during starvation. In Shewanella sp. (strain W3-18-1), this protein is Ribonuclease PH.